Reading from the N-terminus, the 383-residue chain is Histidine decarboxylase (383 aa).

Position 120 (His-120) interacts with substrate. The residue at position 233 (Lys-233) is an N6-(pyridoxal phosphate)lysine.

It belongs to the group II decarboxylase family. In terms of assembly, homotetramer. Pyridoxal 5'-phosphate serves as cofactor.

The catalysed reaction is L-histidine + H(+) = histamine + CO2. The sequence is that of Histidine decarboxylase from Acinetobacter baumannii (strain ACICU).